A 478-amino-acid polypeptide reads, in one-letter code: JmjC domain-containing histone demethylation protein 1 (478 aa).

Residues 5–68 (SESCPLCKVH…IYHCPECVPK (64 aa)) form a PHD-type zinc finger. The region spanning 217–383 (SDVAKLGVDF…MQLKINEIER (167 aa)) is the JmjC domain. Residue Thr-266 participates in substrate binding. Residues His-269 and Asp-271 each coordinate Fe cation. Lys-286 contacts substrate. Position 351 (His-351) interacts with Fe cation.

It belongs to the JHDM1 histone demethylase family. It depends on Fe(2+) as a cofactor.

It localises to the nucleus. The catalysed reaction is N(6),N(6)-dimethyl-L-lysyl(36)-[histone H3] + 2 2-oxoglutarate + 2 O2 = L-lysyl(36)-[histone H3] + 2 formaldehyde + 2 succinate + 2 CO2. In terms of biological role, histone demethylase that specifically demethylates 'Lys-36' of histone H3, thereby playing a central role in histone code. This chain is JmjC domain-containing histone demethylation protein 1 (JHD1), found in Candida albicans (strain SC5314 / ATCC MYA-2876) (Yeast).